The primary structure comprises 311 residues: MVKRIFVQGLDSYTTESTVKKYFEQFGTLYECILPPPPRYSVFDNGPDEEKISTRSSIRYEPVENDDVLDDELDVERYDVEKHGDFESYMKKIGEGEAFIKEPRKTSAGYAYITFVDSNGYSNCMKSDIHEIDRAKCTVEPAKDENDKKLKVESKRLFVSYFPLDRLTSKELKMNFGAYGKITDVEFVSDSEGPLHFCIITFADSRSVDVLLTKSIYIRDVLMFTRRAVLKESVKIAEHKIKEQEQQNLVQLPPNHTAYLTPSRPVTSVHASSSASSNHYDPSAAAGYAPLYHQPPESDPLSQCGYGPRKW.

An RRM domain is found at 155–235 (KRLFVSYFPL…RRAVLKESVK (81 aa)). Over residues 261–270 (TPSRPVTSVH) the composition is skewed to polar residues. The segment at 261-311 (TPSRPVTSVHASSSASSNHYDPSAAAGYAPLYHQPPESDPLSQCGYGPRKW) is disordered.

This is Putative RNA-binding protein R05D3.8 from Caenorhabditis elegans.